The sequence spans 259 residues: Protein TILLER ANGLE CONTROL 1 (259 aa).

The IGT motif motif lies at 56 to 62; that stretch reads GILAIGT. Disordered stretches follow at residues 96–123, 206–226, and 239–259; these read EEKAEAKQDTPVTAPSEPASALEPAKMH, SCMEKMHHKKPTKPTSKPLKA, and GKKIHPEQLNGRSNAEGPVTA. A compositionally biased stretch (low complexity) spans 109-119; it reads APSEPASALEP.

It belongs to the TAC family. Expressed in the basal part of seedlings.

Involved in the regulation of tiller growth angle. Promotes horizontal shoot growth. TAC1 and LAZY1 play opposite functions in the regulation of tiller growth angle. This Oryza sativa subsp. indica (Rice) protein is Protein TILLER ANGLE CONTROL 1.